The primary structure comprises 226 residues: dITP/XTP pyrophosphatase (226 aa).

Position 14 to 19 (14 to 19 (TGNKDK)) interacts with substrate. Residues Glu49 and Asp83 each contribute to the Mg(2+) site. Asp83 serves as the catalytic Proton acceptor. Substrate-binding positions include Thr84, 176–179 (FGYD), Lys199, and 204–205 (HR).

The protein belongs to the HAM1 NTPase family. Homodimer. Mg(2+) serves as cofactor.

The catalysed reaction is XTP + H2O = XMP + diphosphate + H(+). The enzyme catalyses dITP + H2O = dIMP + diphosphate + H(+). It catalyses the reaction ITP + H2O = IMP + diphosphate + H(+). Functionally, pyrophosphatase that catalyzes the hydrolysis of nucleoside triphosphates to their monophosphate derivatives, with a high preference for the non-canonical purine nucleotides XTP (xanthosine triphosphate), dITP (deoxyinosine triphosphate) and ITP. Seems to function as a house-cleaning enzyme that removes non-canonical purine nucleotides from the nucleotide pool, thus preventing their incorporation into DNA/RNA and avoiding chromosomal lesions. The chain is dITP/XTP pyrophosphatase from Chlorobaculum tepidum (strain ATCC 49652 / DSM 12025 / NBRC 103806 / TLS) (Chlorobium tepidum).